The chain runs to 916 residues: Protein translocase subunit SecA (916 aa).

ATP contacts are provided by residues glutamine 87, 105–109, and aspartate 507; that span reads GEGKT. Zn(2+)-binding residues include cysteine 900, cysteine 902, cysteine 911, and histidine 912.

The protein belongs to the SecA family. In terms of assembly, monomer and homodimer. Part of the essential Sec protein translocation apparatus which comprises SecA, SecYEG and auxiliary proteins SecDF-YajC and YidC. The cofactor is Zn(2+).

The protein localises to the cell inner membrane. It is found in the cytoplasm. The catalysed reaction is ATP + H2O + cellular proteinSide 1 = ADP + phosphate + cellular proteinSide 2.. Functionally, part of the Sec protein translocase complex. Interacts with the SecYEG preprotein conducting channel. Has a central role in coupling the hydrolysis of ATP to the transfer of proteins into and across the cell membrane, serving both as a receptor for the preprotein-SecB complex and as an ATP-driven molecular motor driving the stepwise translocation of polypeptide chains across the membrane. This Neisseria meningitidis serogroup A / serotype 4A (strain DSM 15465 / Z2491) protein is Protein translocase subunit SecA.